A 203-amino-acid polypeptide reads, in one-letter code: FMN-dependent NADH:quinone oxidoreductase (203 aa).

Residues S9, 15–17 (SVS), and 139–142 (TRGG) contribute to the FMN site.

It belongs to the azoreductase type 1 family. As to quaternary structure, homodimer. FMN is required as a cofactor.

The enzyme catalyses 2 a quinone + NADH + H(+) = 2 a 1,4-benzosemiquinone + NAD(+). The catalysed reaction is N,N-dimethyl-1,4-phenylenediamine + anthranilate + 2 NAD(+) = 2-(4-dimethylaminophenyl)diazenylbenzoate + 2 NADH + 2 H(+). Its function is as follows. Quinone reductase that provides resistance to thiol-specific stress caused by electrophilic quinones. In terms of biological role, also exhibits azoreductase activity. Catalyzes the reductive cleavage of the azo bond in aromatic azo compounds to the corresponding amines. The chain is FMN-dependent NADH:quinone oxidoreductase from Albidiferax ferrireducens (strain ATCC BAA-621 / DSM 15236 / T118) (Rhodoferax ferrireducens).